The following is a 1288-amino-acid chain: (E3-independent) E2 ubiquitin-conjugating enzyme UBE2O (1288 aa).

Composition is skewed to low complexity over residues 1 to 26 (MADPAAPAPAQAQAAAAPTPAAAPAA) and 34 to 47 (ATDSASGPSSDSGP). Disordered stretches follow at residues 1-51 (MADP…EAGS) and 80-109 (EDSDSEGDDDGRGSSGCSEAGGAGHEEGRA). Ser-45, Ser-82, Ser-84, and Ser-394 each carry phosphoserine. Disordered regions lie at residues 396–529 (TPDT…KNKV) and 711–743 (ESDYDSVEGSSSGASSDEWEDDSDSWETDNGLV). Residues 401-418 (CPRDHSMEDPDKKGEARA) are compositionally biased toward basic and acidic residues. Ser-436 carries the post-translational modification Phosphoserine. A compositionally biased stretch (acidic residues) spans 440-450 (MQDEGSEELQE). A compositionally biased stretch (basic and acidic residues) spans 462-472 (EGGDDGLHSAE). Residues 473–485 (QDADDEAADDTDD) are compositionally biased toward acidic residues. Residues Thr-483 and Thr-486 each carry the phosphothreonine modification. Residues 486–502 (TSSVTSSASSTTSSQSG) show a composition bias toward low complexity. The residue at position 510 (Ser-510) is a Phosphoserine. The span at 517-528 (NLKRKHKRKKNK) shows a compositional bias: basic residues. Residues 717–726 (VEGSSSGASS) show a composition bias toward low complexity. Positions 727–737 (DEWEDDSDSWE) are enriched in acidic residues. A coiled-coil region spans residues 809–879 (RELKEAIKIL…IAEEEKMEAV (71 aa)). Ser-833 carries the phosphoserine modification. Thr-835 carries the post-translational modification Phosphothreonine. Ser-836 carries the phosphoserine modification. A compositionally biased stretch (basic and acidic residues) spans 872–890 (EEEKMEAVPDTERKEEKPE). Residues 872-899 (EEEKMEAVPDTERKEEKPEVQSPVKAEW) are disordered. The residue at position 893 (Ser-893) is a Phosphoserine. One can recognise a UBC core domain in the interval 950 to 1110 (KFFSTVRKEM…ALIRVVQSMT (161 aa)). Cys-1037 acts as the Glycyl thioester intermediate in catalysis. Positions 1158–1247 (GALKDSSSLE…RSFLPEKSGY (90 aa)) are disordered.

It belongs to the ubiquitin-conjugating enzyme family. Interacts with CPNE1 (via VWFA domain) and CPNE4 (via VWFA domain). Interacts with UBR2. Phosphorylated. Phosphorylation affects subcellular location. In terms of processing, ubiquitinated: autoubiquitinates, possibly affecting its subcellular location. As to expression, highly expressed in reticulocytes.

It is found in the cytoplasm. The protein resides in the nucleus. The catalysed reaction is S-ubiquitinyl-[E1 ubiquitin-activating enzyme]-L-cysteine + [acceptor protein]-L-lysine = [E1 ubiquitin-activating enzyme]-L-cysteine + N(6)-monoubiquitinyl-[acceptor protein]-L-lysine.. It functions in the pathway protein modification; protein ubiquitination. With respect to regulation, inhibited by inorganic arsenite such as phenylarsenoxides. Its function is as follows. E2/E3 hybrid ubiquitin-protein ligase that displays both E2 and E3 ligase activities and mediates monoubiquitination of target proteins. Negatively regulates TRAF6-mediated NF-kappa-B activation independently of its E2 activity. Acts as a positive regulator of BMP7 signaling by mediating monoubiquitination of SMAD6, thereby regulating adipogenesis. Mediates monoubiquitination at different sites of the nuclear localization signal (NLS) of BAP1, leading to cytoplasmic retention of BAP1. Also able to monoubiquitinate the NLS of other chromatin-associated proteins, such as INO80 and CXXC1, affecting their subcellular location. Acts as a regulator of retrograde transport by assisting the TRIM27:MAGEL2 E3 ubiquitin ligase complex to mediate 'Lys-63'-linked ubiquitination of WASHC1, leading to promote endosomal F-actin assembly. The sequence is that of (E3-independent) E2 ubiquitin-conjugating enzyme UBE2O (Ube2o) from Mus musculus (Mouse).